An 801-amino-acid chain; its full sequence is MTTEKGLLAEAESPPQDQKQEGEEEVESCTTQPVVGSGDKDPETEQSQESPSTTSPSTRKSKDRHSQGKGLSRLFSSFLKRPKSQVSSDEKEVELLGEKGQDQKDVDEGLGEQLEDDVFLKAPIAAPEPELRTDPSLDLHSLSSAETQPAQEEQKEDQDPEADCEDVEGKEPIKKPEGESKASHKVVRRSPNMRCKVTLLDDTVYECDLEKHAKGQDIFKKVCSHLNIVEEDYFGLAIWESPTCKVWLDPLKDIRKQVHGGPCEFTSNVKFYPPDPAQLSEDITRYYLCLQLRKDIFSGRLPCSFATLALLGSYTVQSEVGDYEEDLHGVDYVSEFKLSPNQTKDLEEKVGELHKSYRSMTPAQADLEFLENAKKLTMYGVDIHQAKDLEGVDIKLGVCSGGLMVFKDNLRINRFPWPKVLKISYKRSSFFIKIRPGEQEQYESTIGFKLPSYKAAKKLWKVCVEHHTFFRLTSTESIPKHRFLSLGSTFRYSGRTQAQTRHASALIDRPAPHFVRTGSKRASRSLDGAAVATPEASRTHRPVSAPVFPPEFPAVQRKTPGPRVEEMPKKTEEKPKEGMPNQRESPKDVKATQQDSPSPTVNGDKVKDLEKTQDEIIRHHASIRELKKSFMESVPAPRPSEWDKRLSTHSPFRTLSFNGQVQTGTDGPPLVKTQTVTISNATNGEKGEIPTKEVPLVHTETKTITYEAARSDDVNTDQEPGILLTAHTITSETTSSTTTTQITKTVKGGISETLIEKRIVITGDGDLDHDQVLVQAIKEAKEQHPDMSVTKGVVHQETEIA.

The disordered stretch occupies residues Met1–Val187. Low complexity predominate over residues Glu45–Thr58. The span at Ser88 to Asp107 shows a compositional bias: basic and acidic residues. Residues Glu108–Asp117 show a composition bias toward acidic residues. The segment covering Ser141 to Gln151 has biased composition (polar residues). The segment covering Gln154–Asp166 has biased composition (acidic residues). Residues Val167–Ala182 are compositionally biased toward basic and acidic residues. Residues Met193–Ser474 enclose the FERM domain. Residues Ser477–Lys587 are hydrophilic. The segment at Arg516 to Gln613 is disordered. Basic and acidic residues predominate over residues Arg563–Glu577. Residues Asp588–Pro651 form a spectrin--actin-binding region. Polar residues predominate over residues Ala591–Val601. Residues Asp604–Gln613 show a composition bias toward basic and acidic residues. Residues Arg653–Ala801 are C-terminal (CTD).

Binds with a high affinity to glycophorin and with lower affinity to band III protein. Associates with the nuclear mitotic apparatus. Binds calmodulin. Phosphorylated at multiple sites by different protein kinases and each phosphorylation event selectively modulates the protein's functions. As to expression, found exclusively in photoreceptors following the terminal mitosis of retinal neurons. When retinal synaptogenesis is complete, protein 4.1 is also expressed in the inner retina. In adult amphibian retinas, protein 4.1 is detected in photoreceptors, bipolar cells, and ganglion cell axons.

The protein localises to the nucleus. It localises to the cytoplasm. Its subcellular location is the cytoskeleton. It is found in the cell cortex. Its function is as follows. Protein 4.1 is a major structural element of the erythrocyte membrane skeleton. It plays a key role in regulating membrane physical properties of mechanical stability and deformability by stabilizing spectrin-actin interaction. May be required for dynein-dynactin complex and NUMA1 recruitment at the mitotic cell cortex during anaphase. This Xenopus laevis (African clawed frog) protein is Protein 4.1.